Reading from the N-terminus, the 396-residue chain is Ribosomal RNA large subunit methyltransferase I (396 aa).

Residues 2-81 (TVRLFLAKGR…EEINIEFFIR (80 aa)) enclose the PUA domain.

This sequence belongs to the methyltransferase superfamily. RlmI family.

The protein localises to the cytoplasm. The enzyme catalyses cytidine(1962) in 23S rRNA + S-adenosyl-L-methionine = 5-methylcytidine(1962) in 23S rRNA + S-adenosyl-L-homocysteine + H(+). Functionally, specifically methylates the cytosine at position 1962 (m5C1962) of 23S rRNA. The sequence is that of Ribosomal RNA large subunit methyltransferase I from Serratia proteamaculans (strain 568).